A 185-amino-acid polypeptide reads, in one-letter code: MSLGALYVVSGPSGAGKSTVCKLVRERLGINLSISATSRKPRNGEQEGVDYFFITAEEFERKIKNDDFLEYANVHGNYYGTLKSEVEERLKRGEKVLLEIDVQGGVQVKNKFPEANLIFFKTANKEELEKRLRGRNTDSEEVIQARLKNSLKELEYESKYDRVIINNEIEQACNDLISIIENGVK.

The 178-residue stretch at 4 to 181 folds into the Guanylate kinase-like domain; the sequence is GALYVVSGPS…ACNDLISIIE (178 aa). Residue 11-18 coordinates ATP; sequence GPSGAGKS.

This sequence belongs to the guanylate kinase family.

The protein resides in the cytoplasm. It carries out the reaction GMP + ATP = GDP + ADP. Functionally, essential for recycling GMP and indirectly, cGMP. The sequence is that of Guanylate kinase from Fusobacterium nucleatum subsp. nucleatum (strain ATCC 25586 / DSM 15643 / BCRC 10681 / CIP 101130 / JCM 8532 / KCTC 2640 / LMG 13131 / VPI 4355).